Reading from the N-terminus, the 159-residue chain is 6,7-dimethyl-8-ribityllumazine synthase (159 aa).

5-amino-6-(D-ribitylamino)uracil contacts are provided by residues Phe-23, 61–63 (SFE), and 85–87 (AVI). Position 90-91 (90-91 (DT)) interacts with (2S)-2-hydroxy-3-oxobutyl phosphate. Residue His-93 is the Proton donor of the active site. Residue Phe-118 participates in 5-amino-6-(D-ribitylamino)uracil binding. A (2S)-2-hydroxy-3-oxobutyl phosphate-binding site is contributed by Arg-132.

It belongs to the DMRL synthase family.

It carries out the reaction (2S)-2-hydroxy-3-oxobutyl phosphate + 5-amino-6-(D-ribitylamino)uracil = 6,7-dimethyl-8-(1-D-ribityl)lumazine + phosphate + 2 H2O + H(+). The protein operates within cofactor biosynthesis; riboflavin biosynthesis; riboflavin from 2-hydroxy-3-oxobutyl phosphate and 5-amino-6-(D-ribitylamino)uracil: step 1/2. Functionally, catalyzes the formation of 6,7-dimethyl-8-ribityllumazine by condensation of 5-amino-6-(D-ribitylamino)uracil with 3,4-dihydroxy-2-butanone 4-phosphate. This is the penultimate step in the biosynthesis of riboflavin. This Synechococcus sp. (strain RCC307) protein is 6,7-dimethyl-8-ribityllumazine synthase.